The following is a 504-amino-acid chain: ATP synthase subunit alpha 2 (504 aa).

Residue 169–176 (GDRQTGKT) participates in ATP binding.

Belongs to the ATPase alpha/beta chains family. In terms of assembly, F-type ATPases have 2 components, CF(1) - the catalytic core - and CF(0) - the membrane proton channel. CF(1) has five subunits: alpha(3), beta(3), gamma(1), delta(1), epsilon(1). CF(0) has three main subunits: a(1), b(2) and c(9-12). The alpha and beta chains form an alternating ring which encloses part of the gamma chain. CF(1) is attached to CF(0) by a central stalk formed by the gamma and epsilon chains, while a peripheral stalk is formed by the delta and b chains.

It is found in the cell membrane. It catalyses the reaction ATP + H2O + 4 H(+)(in) = ADP + phosphate + 5 H(+)(out). Its function is as follows. Produces ATP from ADP in the presence of a proton gradient across the membrane. The alpha chain is a regulatory subunit. In Listeria monocytogenes serotype 4b (strain F2365), this protein is ATP synthase subunit alpha 2.